We begin with the raw amino-acid sequence, 327 residues long: Vacuolar protein sorting-associated protein 26A (327 aa).

Positions 306–327 are disordered; the sequence is RTNFHQRFESPESQASAEQPEM. At serine 315 the chain carries Phosphoserine. The span at 316–327 shows a compositional bias: polar residues; it reads PESQASAEQPEM.

It belongs to the VPS26 family. Component of the heterotrimeric retromer cargo-selective complex (CSC), also described as vacuolar protein sorting subcomplex (VPS), formed by VPS26 (VPS26A or VPS26B), VPS29 and VPS35. The CSC has a highly elongated structure with VPS26 and VPS29 binding independently at opposite distal ends of VPS35 as central platform. The CSC is believed to associate with variable sorting nexins to form functionally distinct retromer complex variants. The originally described retromer complex (also called SNX-BAR retromer) is a pentamer containing the CSC and a heterodimeric membrane-deforming subcomplex formed between SNX1 or SNX2 and SNX5 or SNX6 (also called SNX-BAR subcomplex); the respective CSC and SNX-BAR subcomplexes associate with low affinity. The CSC associates with SNX3 to form a SNX3-retromer complex. The CSC associates with SNX27, the WASH complex and the SNX-BAR subcomplex to form the SNX27-retromer complex. Interacts with VPS29, VPS35, SNX27, SNX1, SNX2, SNX5, SNX6, SNX3, RAB7A, ECPAS, EHD1, WASHC5, SORL1.

The protein localises to the cytoplasm. It is found in the endosome membrane. The protein resides in the early endosome. In terms of biological role, acts as a component of the retromer cargo-selective complex (CSC). The CSC is believed to be the core functional component of retromer or respective retromer complex variants acting to prevent missorting of selected transmembrane cargo proteins into the lysosomal degradation pathway. The recruitment of the CSC to the endosomal membrane involves RAB7A and SNX3. The SNX-BAR retromer mediates retrograde transport of cargo proteins from endosomes to the trans-Golgi network (TGN) and is involved in endosome-to-plasma membrane transport for cargo protein recycling. The SNX3-retromer mediates the retrograde endosome-to-TGN transport of WLS distinct from the SNX-BAR retromer pathway. The SNX27-retromer is believed to be involved in endosome-to-plasma membrane trafficking and recycling of a broad spectrum of cargo proteins. The CSC complex seems to act as recruitment hub for other proteins, such as the WASH complex and TBC1D5. Required for retrograde transport of lysosomal enzyme receptor IGF2R. Required to regulate transcytosis of the polymeric immunoglobulin receptor (pIgR-pIgA). Required for the endosomal localization of WASHC2 (indicative for the WASH complex). Required for the endosomal localization of TBC1D5. Mediates retromer cargo recognition of SORL1 and is involved in trafficking of SORL1 implicated in sorting and processing of APP. Involved in retromer-independent lysosomal sorting of F2R. Involved in recycling of ADRB2. Acts redundantly with VSP26B in SNX-27 mediated endocytic recycling of SLC2A1/GLUT1. Enhances the affinity of SNX27 for PDZ-binding motifs in cargo proteins. This chain is Vacuolar protein sorting-associated protein 26A (VPS26A), found in Bos taurus (Bovine).